A 382-amino-acid chain; its full sequence is Mannitol-1-phosphate 5-dehydrogenase (382 aa).

Residue 3-14 (ALHFGAGNIGRG) coordinates NAD(+).

This sequence belongs to the mannitol dehydrogenase family.

The enzyme catalyses D-mannitol 1-phosphate + NAD(+) = beta-D-fructose 6-phosphate + NADH + H(+). The polypeptide is Mannitol-1-phosphate 5-dehydrogenase (Salmonella agona (strain SL483)).